The sequence spans 82 residues: Transcription elongation factor 1 homolog (82 aa).

4 residues coordinate Zn(2+): Cys-26, Cys-29, Cys-50, and Cys-53.

Belongs to the ELOF1 family.

Its subcellular location is the nucleus. Functionally, transcription elongation factor implicated in the maintenance of proper chromatin structure in actively transcribed regions. This Manduca sexta (Tobacco hawkmoth) protein is Transcription elongation factor 1 homolog.